The sequence spans 268 residues: MNIEVKMEKEKSLGNQALIRGLRLLDILSNYPNGCPLAKLAELANLNKSTAHRLLQGLQNEGYVKPANAAGSYRLTIKCLSIGQKVLSSMNIIHVASPYLEQLNLKLGETINFSKREDDHAIMIYKLEPTNGMLKTRAYIGQYLKLYCSAMGKIFLAYEKKVDYLSHYWQSHQREIKKLTRYTITELDDIKLELETIRQTAYAMDREENELGVTCIACPIFDSFGQVEYAISVSMSIYRLNKFGTDAFLQEIRKTAEQISLELGYENI.

The 63-residue stretch at 15-77 (NQALIRGLRL…NAAGSYRLTI (63 aa)) folds into the HTH iclR-type domain. The segment at residues 37-56 (LAKLAELANLNKSTAHRLLQ) is a DNA-binding region (H-T-H motif). In terms of domain architecture, IclR-ED spans 92–265 (IIHVASPYLE…AEQISLELGY (174 aa)).

This is an uncharacterized protein from Haemophilus influenzae (strain ATCC 51907 / DSM 11121 / KW20 / Rd).